Reading from the N-terminus, the 375-residue chain is Queuine tRNA-ribosyltransferase (375 aa).

Catalysis depends on Asp-90, which acts as the Proton acceptor. Substrate is bound by residues 90 to 94, Asp-144, Gln-193, and Gly-220; that span reads DSGGF. The interval 251–257 is RNA binding; the sequence is GVGTPED. Asp-270 serves as the catalytic Nucleophile. The segment at 275–279 is RNA binding; important for wobble base 34 recognition; that stretch reads TRNAR. Residues Cys-308, Cys-310, Cys-313, and His-339 each coordinate Zn(2+).

Belongs to the queuine tRNA-ribosyltransferase family. As to quaternary structure, homodimer. Within each dimer, one monomer is responsible for RNA recognition and catalysis, while the other monomer binds to the replacement base PreQ1. Zn(2+) is required as a cofactor.

It carries out the reaction 7-aminomethyl-7-carbaguanine + guanosine(34) in tRNA = 7-aminomethyl-7-carbaguanosine(34) in tRNA + guanine. The protein operates within tRNA modification; tRNA-queuosine biosynthesis. Its function is as follows. Catalyzes the base-exchange of a guanine (G) residue with the queuine precursor 7-aminomethyl-7-deazaguanine (PreQ1) at position 34 (anticodon wobble position) in tRNAs with GU(N) anticodons (tRNA-Asp, -Asn, -His and -Tyr). Catalysis occurs through a double-displacement mechanism. The nucleophile active site attacks the C1' of nucleotide 34 to detach the guanine base from the RNA, forming a covalent enzyme-RNA intermediate. The proton acceptor active site deprotonates the incoming PreQ1, allowing a nucleophilic attack on the C1' of the ribose to form the product. After dissociation, two additional enzymatic reactions on the tRNA convert PreQ1 to queuine (Q), resulting in the hypermodified nucleoside queuosine (7-(((4,5-cis-dihydroxy-2-cyclopenten-1-yl)amino)methyl)-7-deazaguanosine). This chain is Queuine tRNA-ribosyltransferase, found in Janthinobacterium sp. (strain Marseille) (Minibacterium massiliensis).